A 349-amino-acid chain; its full sequence is uncharacterized protein (349 aa).

The chain crosses the membrane as a helical span at residues 221 to 241; the sequence is AFVVWIGSGLNIIWWTGIVLL. The span at 328–339 shows a compositional bias: pro residues; that stretch reads VASAPPAVPSQP. The tract at residues 328 to 349 is disordered; sequence VASAPPAVPSQPPEYSSVFPPV.

The protein localises to the host membrane. This is an uncharacterized protein from Human cytomegalovirus (strain Merlin) (HHV-5).